The chain runs to 70 residues: Cold shock-like protein CspH (70 aa).

One can recognise a CSD domain in the interval 7 to 67 (GIVKTFDRKS…GLRGPTAANV (61 aa)).

The protein resides in the cytoplasm. The polypeptide is Cold shock-like protein CspH (cspH) (Escherichia coli O6:H1 (strain CFT073 / ATCC 700928 / UPEC)).